Consider the following 933-residue polypeptide: Serine/threonine-protein kinase EDR1 (933 aa).

Residues 1–10 show a composition bias toward basic residues; sequence MKHIFKKLHR. Disordered regions lie at residues 1-74, 342-424, 527-550, and 604-650; these read MKHI…ADYM, CNSN…TAIG, HRDP…AISS, and HGQQ…YRND. Residues 37-48 are compositionally biased toward polar residues; sequence NPPQATPSSVTE. Residues 53–68 show a composition bias toward low complexity; that stretch reads AGATSSMASPAPTAAS. Residues 342-356 show a composition bias toward polar residues; it reads CNSNGNKFPTAQFSN. The span at 367 to 378 shows a compositional bias: low complexity; it reads SSHSSMANYSSS. Residues 379–389 show a composition bias toward basic and acidic residues; the sequence is LDRRTEAERTD. A compositionally biased stretch (low complexity) spans 404 to 413; sequence SSPSSVTSST. Positions 533 to 550 are enriched in polar residues; it reads GNTQSSYATSSSNGAISS. Basic and acidic residues predominate over residues 607 to 621; it reads QNDESHIHDHRKYTS. The Protein kinase domain maps to 669 to 925; that stretch reads LVIAERIGLG…QLTEVLKPLN (257 aa). Residues 675–683 and Lys696 each bind ATP; that span reads IGLGSYGEV. The active-site Proton acceptor is Asp792.

This sequence belongs to the protein kinase superfamily. TKL Ser/Thr protein kinase family. RAF subfamily. As to quaternary structure, interacts with KEG. Binds and recruited by EDR4 at the powdery mildew (e.g. G.cichoracearum) penetration site on the plasma membrane. In terms of processing, autophosphorylated.

It localises to the cell membrane. Its subcellular location is the endosome. It is found in the nucleus. The protein localises to the endoplasmic reticulum. The protein resides in the golgi apparatus. It localises to the trans-Golgi network. Its subcellular location is the early endosome. The enzyme catalyses L-seryl-[protein] + ATP = O-phospho-L-seryl-[protein] + ADP + H(+). It carries out the reaction L-threonyl-[protein] + ATP = O-phospho-L-threonyl-[protein] + ADP + H(+). MAPKKK serine/threonine-protein kinase involved in the regulation of a MAP kinase cascade (probably including MPK3 and MPK6) that negatively regulates salicylic acid- (SA-) dependent defense responses, abscisic acid (ABA) signaling, and ethylene-induced senescence. Also modulates stress response (e.g. drought) signaling and cell death, in an ORE9-dependent manner. Functions at a point of cross talk between ethylene, ABA and SA signaling that impinges on senescence and cell death. On the other hand, it confers sensitivity to various pathogens such as the fungus E.cichoracearum, the oomycete H.parasitica and the bacteria P.syringae pv. tomato DC3000. Required for resistance to some hemibiotrophic/necrotrophic fungal pathogens (e.g. C.gloeosporioides, C.higginsianum and A.brassicicola) through the induction of defensin expression, probably by repressing MYC2, an inhibitor of defensin genes (PDFs). Together with KEG, may regulate endocytic trafficking and/or the formation of signaling complexes on trans-Golgi network (TGN)/ early endosome (EE) vesicles during stress responses. The chain is Serine/threonine-protein kinase EDR1 (EDR1) from Arabidopsis thaliana (Mouse-ear cress).